The chain runs to 244 residues: Acetylglutamate kinase (244 aa).

Residues 40 to 41 (GG), Arg-62, and Asn-155 each bind substrate.

The protein belongs to the acetylglutamate kinase family. ArgB subfamily.

It localises to the cytoplasm. The enzyme catalyses N-acetyl-L-glutamate + ATP = N-acetyl-L-glutamyl 5-phosphate + ADP. It participates in amino-acid biosynthesis; L-arginine biosynthesis; N(2)-acetyl-L-ornithine from L-glutamate: step 2/4. In terms of biological role, catalyzes the ATP-dependent phosphorylation of N-acetyl-L-glutamate. The protein is Acetylglutamate kinase of Leuconostoc mesenteroides subsp. mesenteroides (strain ATCC 8293 / DSM 20343 / BCRC 11652 / CCM 1803 / JCM 6124 / NCDO 523 / NBRC 100496 / NCIMB 8023 / NCTC 12954 / NRRL B-1118 / 37Y).